We begin with the raw amino-acid sequence, 723 residues long: Probable inactive serine/threonine-protein kinase fnkD (723 aa).

One can recognise a Protein kinase domain in the interval 33 to 276 (WEIITQLESN…TTSLPKYSTL (244 aa)). 6 FNIP repeats span residues 301 to 342 (FNQP…ELAS), 343 to 384 (FNQT…LLSS), 385 to 426 (FNQP…SLAS), 524 to 565 (FNQS…ILPS), 566 to 606 (FNHP…LGDE), and 647 to 690 (FNIE…FGIT).

The protein belongs to the protein kinase superfamily. STE Ser/Thr protein kinase family.

This is Probable inactive serine/threonine-protein kinase fnkD (fnkD-1) from Dictyostelium discoideum (Social amoeba).